A 649-amino-acid chain; its full sequence is Transcription factor E2-alpha (649 aa).

Disordered stretches follow at residues 37–107 (RPAS…SERN), 132–207 (GLSS…AKTP), 296–325 (TYSGTSGHTPPVSGADSLLGTRGTTASSSG), and 339–376 (DHSSNNFSPSPSTPVGSPQGLPGTSQWPRAGAPSALSP). Residues 57-71 (SESWGNSEQNSSSFD) show a composition bias toward polar residues. The span at 132–148 (GLSSPGPLSPSGVKSSS) shows a compositional bias: low complexity. Serine 135 and serine 140 each carry phosphoserine. The Nuclear localization signal signature appears at 171-177 (PKKVRKV). Residues 339-352 (DHSSNNFSPSPSTP) show a composition bias toward low complexity. The residue at position 351 (threonine 351) is a Phosphothreonine. Serine 355 bears the Phosphoserine mark. Residue arginine 367 is modified to Omega-N-methylarginine. Phosphoserine is present on serine 375. The interval 385-420 (LSKMEDRLDEAIHVLRSHAVGTASELHGLLPGHSTL) is leucine-zipper. Positions 435–547 (AGLVSGSHPE…KAEREKERRV (113 aa)) are disordered. The span at 459-477 (SLPSQPSSLPDLSQRPPDS) shows a compositional bias: low complexity. Lysine 494 participates in a covalent cross-link: Glycyl lysine isopeptide (Lys-Gly) (interchain with G-Cter in SUMO2). Phosphoserine is present on serine 524. Phosphothreonine is present on aspartate 526. A compositionally biased stretch (basic and acidic residues) spans 537–547 (QKAEREKERRV). The bHLH domain maps to 544-597 (ERRVANNARERLRVRDINEAFKELGRMCQLHLSTEKPQTKLLILHQAVAVILSL). A Glycyl lysine isopeptide (Lys-Gly) (interchain with G-Cter in SUMO2) cross-link involves residue lysine 620.

Homodimer. Heterodimer; efficient DNA binding requires dimerization with another bHLH protein. Forms a heterodimer with TWIST1 and TWIST2. Forms a heterodimer with NEUROD1; the heterodimer is inhibited in presence of ID2, but not NR0B2, to E-box element. Forms a heterodimer with TCF15; the heterodimer binds E-box element. Forms a heterodimer with MYOG; heterodimerization enhances MYOG DNA-binding and transcriptional activities. Forms a heterodimer with ATOH8; repress transcription of TCF3 and TCF3-NEUROG3 dimer-induced transactivation of E box-dependent promoters. Component of a nuclear TAL-1 complex composed at least of CBFA2T3, LDB1, TAL1 and TCF3. Interacts with NEUROD2. Interacts with EP300. Interacts with PTF1A, TGFB1I1. Interacts with UBE2I. Interacts with BHLHA9. Interacts with ASB2; the interaction is mediated by SKP2 and targets TCF3 for Notch-induced proteasomal degradation. Interacts with transcription factor ASCL5/AmeloD. In terms of assembly, interacts with RALGAPA1. Interacts with FIGLA. As to quaternary structure, forms a heterodimer with ATOH7; required for ATOH7 DNA-binding. In terms of processing, phosphorylated following NGF stimulation. Undergoes Notch-induced ubiquitination and subsequent proteasomal degradation which is mediated by ASB1 or ASB2, the substrate-recognition components of probable ECS E3 ubiquitin-protein ligase complexes.

It is found in the nucleus. Transcriptional regulator involved in the initiation of neuronal differentiation and mesenchymal to epithelial transition. Heterodimers between TCF3 and tissue-specific basic helix-loop-helix (bHLH) proteins play major roles in determining tissue-specific cell fate during embryogenesis, like muscle or early B-cell differentiation. Together with TCF15, required for the mesenchymal to epithelial transition. Dimers bind DNA on E-box motifs: 5'-CANNTG-3'. Binds to the kappa-E2 site in the kappa immunoglobulin gene enhancer. Binds to the consensus sequence CAC/GCTGT/C present, in the chymotrypsin, insulin, AP-4, and several other gene enhancer motifs. Functionally, facilitates ATOH7 binding to DNA at the consensus sequence 5'-CAGGTG-3', and positively regulates transcriptional activity. The chain is Transcription factor E2-alpha (Tcf3) from Rattus norvegicus (Rat).